Reading from the N-terminus, the 612-residue chain is Coagulation factor XII (612 aa).

A signal peptide spans 1–19 (MRALLLLGALLVSLESTVS). The 49-residue stretch at 42–90 (VTGEPCHFPFQYHRQLHHKCIHRGRPGPRPWCATTPNFEKDQRWAYCLE) folds into the Fibronectin type-II domain. Disulfide bonds link Cys47/Cys73, Cys61/Cys88, Cys98/Cys110, Cys104/Cys119, Cys121/Cys130, Cys135/Cys163, Cys161/Cys170, Cys178/Cys189, Cys183/Cys198, Cys200/Cys209, Cys217/Cys306, Cys240/Cys288, Cys268/Cys301, Cys355/Cys482, Cys393/Cys409, Cys401/Cys471, Cys432/Cys435, Cys498/Cys566, Cys529/Cys545, and Cys556/Cys587. An EGF-like 1 domain is found at 94–131 (VKDHCSKHNPCQKGGTCVNMPDGPRCICADHFTGKHCQ). O-linked (Fuc) threonine glycosylation is present at Thr109. Residues 133-173 (EKCFEPQFFRFFHENEIWHRLEPAGVVKCQCKGPNAQCKPL) form the Fibronectin type-I domain. Residues 174–210 (ASQVCRTNPCLNGGSCLQAEGHRLCRCAPSFAGRLCD) form the EGF-like 2 domain. In terms of domain architecture, Kringle spans 217-306 (CYDDRDRGLS…SWNYCRLAPC (90 aa)). Asn251 and Asn282 each carry an N-linked (GlcNAc...) asparagine glycan. A Peptidase S1 domain is found at 369-611 (VVGGLVALPG…YLAWIREHTA (243 aa)). The Charge relay system role is filled by His408. An N-linked (GlcNAc...) asparagine glycan is attached at Asn429. The active-site Charge relay system is Asp457. Residue Ser560 is the Charge relay system of the active site.

Belongs to the peptidase S1 family. Interacts with HRG; the interaction, which is enhanced in the presence of zinc ions and inhibited by heparin-binding, inhibits factor XII autoactivation and contact-initiated coagulation. In terms of processing, O- and N-glycosylated.

The protein localises to the secreted. It carries out the reaction Selective cleavage of Arg-|-Ile bonds in factor VII to form factor VIIa and factor XI to form factor XIa.. Activity is promoted in the presence of negatively charged surfaces. Factor XII is a serum glycoprotein that participates in the initiation of blood coagulation, fibrinolysis, and the generation of bradykinin and angiotensin. Prekallikrein is cleaved by factor XII to form kallikrein, which then cleaves factor XII first to alpha-factor XIIa and then to beta-factor XIIa. Alpha-factor XIIa activates factor XI to factor XIa. The polypeptide is Coagulation factor XII (F12) (Bos taurus (Bovine)).